The sequence spans 328 residues: Flotillin-like protein FloA (328 aa).

Transmembrane regions (helical) follow at residues 9–29 (LLITGGGLIALAVFFTFVPVG) and 30–50 (LWISSFAAGVHVSIFTLIGMR).

This sequence belongs to the flotillin-like FloA family. Homooligomerizes.

It localises to the cell membrane. Its subcellular location is the membrane raft. Found in functional membrane microdomains (FMM) that may be equivalent to eukaryotic membrane rafts. FMMs are highly dynamic and increase in number as cells age. Flotillins are thought to be important factors in membrane fluidity. The protein is Flotillin-like protein FloA of Exiguobacterium sp. (strain ATCC BAA-1283 / AT1b).